Consider the following 99-residue polypeptide: Accessory protein p12I (99 aa).

Positions 4–11 (RLLSPLSP) match the SH3-binding motif. Residues 12–32 (LALTALLLFLLSPGEVSGLLL) form a helical membrane-spanning segment. The short motif at 33 to 38 (RPLPAP) is the SH3-binding element. Residues 48–68 (ILSNLLFLLFLPLFFSLPLLL) traverse the membrane as a helical segment. Short sequence motifs (SH3-binding) lie at residues 70–77 (PSLPITMR) and 88–93 (RAPSQP).

Belongs to the HTLV-1 accessory protein p12I family. P12I is a homodimer. Interacts with human CANX, CALR, ATP6V0C, IL2RB, IL2RG. Binds to MHC-I heavy chains HLA-A2, HLA-B7 and HLA-Cw4. In terms of processing, ubiquitinated; a fraction of P12I is degraded via the ubiquitin system.

Its subcellular location is the host endoplasmic reticulum membrane. It localises to the host Golgi apparatus. It is found in the host cis-Golgi network membrane. In terms of biological role, p12I is a modulator of T-lymphocyte proliferation and immune function and may contribute to establish a persistent infection. Binds and down-modulates cell surface expression of interleukin-2 receptors IL2RB and IL2RG. Also down-modulates cell surface MHC-I molecules by binding to free immature MHC-I heavy chains in the ER and targeting them to the proteasome for degradation. Binding to IL2RB mediates recruitment of JAK1 and JAK3. As a result of this interaction, p12I increases DNA-binding and transcriptional activity of STAT5. This is Accessory protein p12I from Homo sapiens (Human).